The sequence spans 380 residues: Cytochrome b (380 aa).

Transmembrane regions (helical) follow at residues 34–54, 78–99, 114–134, and 179–199; these read FGSLLGICLVTQILTGLLLAT, WLIRNLHANGASLFFICIYLHI, WNTGVILLLSLMATAFVGYVL, and FFALHFLLPFLIAGLTLTHLT. Residues histidine 84 and histidine 98 each contribute to the heme b site. Histidine 183 and histidine 197 together coordinate heme b. Histidine 202 provides a ligand contact to a ubiquinone. Transmembrane regions (helical) follow at residues 227–247, 289–309, 321–341, and 348–368; these read PKDLLGFILMFLPLTALALFS, LGGVLALAASVLILFLAPFLH, LSQLLFWILVTNLLILTWVGS, and FIIIGQLASLAYFIILLILFP.

The protein belongs to the cytochrome b family. In terms of assembly, the cytochrome bc1 complex contains 11 subunits: 3 respiratory subunits (MT-CYB, CYC1 and UQCRFS1), 2 core proteins (UQCRC1 and UQCRC2) and 6 low-molecular weight proteins (UQCRH/QCR6, UQCRB/QCR7, UQCRQ/QCR8, UQCR10/QCR9, UQCR11/QCR10 and a cleavage product of UQCRFS1). This cytochrome bc1 complex then forms a dimer. Heme b serves as cofactor.

The protein localises to the mitochondrion inner membrane. In terms of biological role, component of the ubiquinol-cytochrome c reductase complex (complex III or cytochrome b-c1 complex) that is part of the mitochondrial respiratory chain. The b-c1 complex mediates electron transfer from ubiquinol to cytochrome c. Contributes to the generation of a proton gradient across the mitochondrial membrane that is then used for ATP synthesis. This is Cytochrome b (MT-CYB) from Todus todus (Jamaican tody).